Consider the following 261-residue polypeptide: Ribosomal RNA small subunit methyltransferase J (261 aa).

S-adenosyl-L-methionine-binding positions include 111 to 112 (RD), 127 to 128 (ER), 163 to 164 (SS), and Asp-181.

The protein belongs to the methyltransferase superfamily. RsmJ family.

It is found in the cytoplasm. It catalyses the reaction guanosine(1516) in 16S rRNA + S-adenosyl-L-methionine = N(2)-methylguanosine(1516) in 16S rRNA + S-adenosyl-L-homocysteine + H(+). Specifically methylates the guanosine in position 1516 of 16S rRNA. This Shewanella sp. (strain ANA-3) protein is Ribosomal RNA small subunit methyltransferase J.